A 196-amino-acid polypeptide reads, in one-letter code: Charged multivesicular body protein 1a (196 aa).

Methionine 1 bears the N-acetylmethionine mark. The stretch at 5–42 forms a coiled coil; it reads LFQLKFTAKQLEKLAKKAEKDSKAEQAKVKKALQQKNV. Serine 101 is subject to Phosphoserine. Positions 102–124 form a coiled coil; the sequence is AMDLQKVSAVMDRFEQQVQNLDV. Serine 173 is modified (phosphoserine). Positions 185 to 195 match the MIT-interacting motif motif; that stretch reads DQLSRRLAALR.

It belongs to the SNF7 family. Probable peripherally associated component of the endosomal sorting required for transport complex III (ESCRT-III). ESCRT-III components are thought to multimerize to form a flat lattice on the perimeter membrane of the endosome. Several assembly forms of ESCRT-III may exist that interact and act sequentially. Self-associates. Interacts with CHMP1B. Interacts with VPS4A. Interacts with VPS4B. Interacts with PHF1. Interacts with IST1. Interacts with MITD1. In terms of tissue distribution, highly expressed in adult heart, kidney and liver. Expressed at lower levels in adult colon, spleen, lung, brain, testis and muscle. Also expressed in myoblasts and embryo fibroblasts.

It localises to the cytoplasm. It is found in the endosome membrane. The protein localises to the nucleus matrix. Functionally, probable peripherally associated component of the endosomal sorting required for transport complex III (ESCRT-III) which is involved in multivesicular bodies (MVBs) formation and sorting of endosomal cargo proteins into MVBs. MVBs contain intraluminal vesicles (ILVs) that are generated by invagination and scission from the limiting membrane of the endosome and mostly are delivered to lysosomes enabling degradation of membrane proteins, such as stimulated growth factor receptors, lysosomal enzymes and lipids. The MVB pathway appears to require the sequential function of ESCRT-O, -I,-II and -III complexes. ESCRT-III proteins mostly dissociate from the invaginating membrane before the ILV is released. The ESCRT machinery also functions in topologically equivalent membrane fission events, such as the terminal stages of cytokinesis. ESCRT-III proteins are believed to mediate the necessary vesicle extrusion and/or membrane fission activities, possibly in conjunction with the AAA ATPase VPS4. Involved in cytokinesis. Involved in recruiting VPS4A and/or VPS4B to the midbody of dividing cells. May also be involved in chromosome condensation. Targets the Polycomb group (PcG) protein BMI1/PCGF4 to regions of condensed chromatin. May play a role in stable cell cycle progression and in PcG gene silencing. In Mus musculus (Mouse), this protein is Charged multivesicular body protein 1a (Chmp1a).